A 272-amino-acid chain; its full sequence is Aquaporin FA-CHIP (272 aa).

At 1-17 the chain is on the cytoplasmic side; it reads MASEFKKKAFWRAVIAE. A helical membrane pass occupies residues 18-35; the sequence is FLAMILFVFISIGAALGF. Over 36–52 the chain is Extracellular; that stretch reads NFPIEEKANQTVGRSQD. Residue Asn44 is glycosylated (N-linked (GlcNAc...) asparagine). A helical transmembrane segment spans residues 53–71; that stretch reads IVKVSLAFGISIATMAQSV. Residues 72-97 are Cytoplasmic-facing; that stretch reads GHVSGAHLNPAVTLGCLLSCQISILK. The NPA 1 motif lies at 80–82; that stretch reads NPA. A helical transmembrane segment spans residues 98–119; the sequence is AVMYIIAQCLGAVVATAILSGI. The Extracellular segment spans residues 120 to 139; the sequence is TSGLENNSLGLNGLSPGVSA. A glycan (N-linked (GlcNAc...) asparagine) is linked at Asn125. A helical transmembrane segment spans residues 140–160; the sequence is GQGLGVEILVTFQLVLCVVAV. At 161–168 the chain is on the cytoplasmic side; that stretch reads TDRRRHDV. The chain crosses the membrane as a helical span at residues 169-188; sequence SGSVPLAIGLSVALGHLIAI. The Extracellular segment spans residues 189–214; that stretch reads DYTGCGMNPARSFGSAVLTKNFTYHW. Residues 196–198 carry the NPA 2 motif; it reads NPA. Asn209 carries N-linked (GlcNAc...) asparagine glycosylation. A helical membrane pass occupies residues 215–236; it reads IFWVGPMIGGAAAAIIYDFILA. Residues 237-272 lie on the Cytoplasmic side of the membrane; the sequence is PRTSDLTDRMKVWTNGQVEEYELDGDDNTRVEMKPK.

This sequence belongs to the MIP/aquaporin (TC 1.A.8) family.

The protein localises to the membrane. In terms of biological role, forms a water-specific channel. This Pelophylax lessonae (Pool frog) protein is Aquaporin FA-CHIP (AQPA).